The sequence spans 185 residues: A-type ATP synthase subunit E (185 aa).

The protein belongs to the V-ATPase E subunit family. Has multiple subunits with at least A(3), B(3), C, D, E, F, H, I and proteolipid K(x).

Its subcellular location is the cell membrane. In terms of biological role, component of the A-type ATP synthase that produces ATP from ADP in the presence of a proton gradient across the membrane. The polypeptide is A-type ATP synthase subunit E (Thermoplasma volcanium (strain ATCC 51530 / DSM 4299 / JCM 9571 / NBRC 15438 / GSS1)).